The chain runs to 293 residues: Indole-3-glycerol phosphate synthase (293 aa).

Belongs to the TrpC family.

The enzyme catalyses 1-(2-carboxyphenylamino)-1-deoxy-D-ribulose 5-phosphate + H(+) = (1S,2R)-1-C-(indol-3-yl)glycerol 3-phosphate + CO2 + H2O. The protein operates within amino-acid biosynthesis; L-tryptophan biosynthesis; L-tryptophan from chorismate: step 4/5. This is Indole-3-glycerol phosphate synthase from Prochlorococcus marinus (strain SARG / CCMP1375 / SS120).